The following is a 194-amino-acid chain: Peptidyl-tRNA hydrolase (194 aa).

Y16 provides a ligand contact to tRNA. H21 functions as the Proton acceptor in the catalytic mechanism. Residues F67, N69, and N115 each coordinate tRNA.

This sequence belongs to the PTH family. As to quaternary structure, monomer.

The protein resides in the cytoplasm. The enzyme catalyses an N-acyl-L-alpha-aminoacyl-tRNA + H2O = an N-acyl-L-amino acid + a tRNA + H(+). In terms of biological role, hydrolyzes ribosome-free peptidyl-tRNAs (with 1 or more amino acids incorporated), which drop off the ribosome during protein synthesis, or as a result of ribosome stalling. Catalyzes the release of premature peptidyl moieties from peptidyl-tRNA molecules trapped in stalled 50S ribosomal subunits, and thus maintains levels of free tRNAs and 50S ribosomes. This is Peptidyl-tRNA hydrolase from Sodalis glossinidius (strain morsitans).